A 518-amino-acid chain; its full sequence is Glutamate--cysteine ligase (518 aa).

This sequence belongs to the glutamate--cysteine ligase type 1 family. Type 1 subfamily.

The catalysed reaction is L-cysteine + L-glutamate + ATP = gamma-L-glutamyl-L-cysteine + ADP + phosphate + H(+). It functions in the pathway sulfur metabolism; glutathione biosynthesis; glutathione from L-cysteine and L-glutamate: step 1/2. This chain is Glutamate--cysteine ligase, found in Escherichia coli O8 (strain IAI1).